The chain runs to 171 residues: 6,7-dimethyl-8-ribityllumazine synthase (171 aa).

5-amino-6-(D-ribitylamino)uracil contacts are provided by residues F30, 64–66 (ALE), and 88–90 (AVI). 93–94 (ET) contacts (2S)-2-hydroxy-3-oxobutyl phosphate. The active-site Proton donor is H96. N121 contributes to the 5-amino-6-(D-ribitylamino)uracil binding site. Residue R135 participates in (2S)-2-hydroxy-3-oxobutyl phosphate binding.

This sequence belongs to the DMRL synthase family.

The enzyme catalyses (2S)-2-hydroxy-3-oxobutyl phosphate + 5-amino-6-(D-ribitylamino)uracil = 6,7-dimethyl-8-(1-D-ribityl)lumazine + phosphate + 2 H2O + H(+). The protein operates within cofactor biosynthesis; riboflavin biosynthesis; riboflavin from 2-hydroxy-3-oxobutyl phosphate and 5-amino-6-(D-ribitylamino)uracil: step 1/2. In terms of biological role, catalyzes the formation of 6,7-dimethyl-8-ribityllumazine by condensation of 5-amino-6-(D-ribitylamino)uracil with 3,4-dihydroxy-2-butanone 4-phosphate. This is the penultimate step in the biosynthesis of riboflavin. The polypeptide is 6,7-dimethyl-8-ribityllumazine synthase (Polynucleobacter necessarius subsp. necessarius (strain STIR1)).